The sequence spans 592 residues: Cell division protein FtsZ (592 aa).

Residues 24-28 (GGGGN), 111-113 (GTG), glutamate 142, arginine 146, and aspartate 190 contribute to the GTP site. The tract at residues 333 to 362 (KFQKSVSSVRKNDSGINQTASHPQSSQLRS) is disordered.

This sequence belongs to the FtsZ family. Homodimer. Polymerizes to form a dynamic ring structure in a strictly GTP-dependent manner. Interacts directly with several other division proteins.

It localises to the cytoplasm. Essential cell division protein that forms a contractile ring structure (Z ring) at the future cell division site. The regulation of the ring assembly controls the timing and the location of cell division. One of the functions of the FtsZ ring is to recruit other cell division proteins to the septum to produce a new cell wall between the dividing cells. Binds GTP and shows GTPase activity. The sequence is that of Cell division protein FtsZ from Bartonella bacilliformis.